Reading from the N-terminus, the 151-residue chain is UPF0208 membrane protein Spro_3315 (151 aa).

The next 2 membrane-spanning stretches (helical) occupy residues 46–64 and 70–90; these read FAVR…WQIA and GPAI…LWWL.

This sequence belongs to the UPF0208 family.

It is found in the cell inner membrane. This chain is UPF0208 membrane protein Spro_3315, found in Serratia proteamaculans (strain 568).